The primary structure comprises 638 residues: Chaperone protein HtpG (638 aa).

Residues 1-328 (MGDVEELKFS…SSDLPLNISR (328 aa)) are a; substrate-binding. A b region spans residues 329-558 (ETLQNNMVIE…EHALDIRMER (230 aa)). Residues 484 to 508 (LEKFTEGDDQQSTKKKKEKKDTDDA) are disordered. Residues 559–638 (FLREQKQLSY…NQVLARLFKK (80 aa)) are c.

It belongs to the heat shock protein 90 family. Homodimer.

The protein resides in the cytoplasm. Molecular chaperone. Has ATPase activity. The chain is Chaperone protein HtpG from Anaplasma marginale (strain St. Maries).